The following is an 835-amino-acid chain: MADIDQYILDDSDIAFEYELQKSPSVEVWQRYIAHWEAQVCEDGVRSARHILWLYERMVTQFPTLTVWEQYIGWFRRQYKLDQYLDTFKLYERCINSVKGPLGVFAVEVMLFCISTFDLDIIMKGLQLVLHRCNKDEVERIWNIVLGFALEHVLPSEEGPNNIDFSAFNDRNYEDLRLDIYKLLFLGGDQTEIEDDEEDEDVDKWTASLLRYYLQVANEDKYDETLRLLIRTKDIKIIKECFDLYIFNDKTGKNNRESKKEYDFDLYIYYLDTLDKLRLDKDYKSVFDNLLEKYPQHRVLLTLKLADFHMKRADFDKMEKVLTKALSETVKTNEFIAIYTYHVNFEQAYVETIFDEMRDDPEIQVQKKWKSEMDDHLIILGDLTSRYHLLVNDLKIRQNPNSVSNWLERTTLFEDFDKKCEVFVEAIKTIDPIKVKDKEYGMLGKLWCDYAKVYWSNKSYEEARTIYESATKVPFPDLQDLEIVWHTWAVNEFQIHNIERALKILRKALTVPPSYESIIDRFKSENRRLPSQTILFTSKRLWNYYIDLLESIPTIDANDVIRAYDTLMTLKLITPVGILNYATFLKQNNNLHGSLQVYEKGINMFPPEICYELWTLLLDEVMEPAHQATKERIRELFEQCLQQLGNTDININSIYVKYSDFEIHNKLFSRAIDLLMSGARRPYTNKEQLKQRVDLWESAISKCEEFLGPDSLRQLLSECIQELPNSKAITYVLKFTKLEMSLSDYTRARELLQYGAQLLPPIKNEELWGLWEQFELEHGDKSYYKEMLLLKQKLEKEMKVDTEEVSKGQGNVQFVASSVKNQEAKTNPDEIEIDI.

HAT repeat units lie at residues 7–38, 46–77, 313–348, 414–456, 458–494, 517–551, 589–623, 628–664, 707–741, and 743–777; these read YILD…HWEA, RSAR…WFRR, ADFD…FEQA, EDFD…VYWS, KSYE…NEFQ, SIID…LLES, NNLH…EVME, ATKE…FEIH, LGPD…LEMS, and SDYT…FELE.

Belongs to the crooked-neck family. Associated with the spliceosome.

It localises to the nucleus. Functionally, involved in pre-mRNA splicing and cell cycle progression. This Candida glabrata (strain ATCC 2001 / BCRC 20586 / JCM 3761 / NBRC 0622 / NRRL Y-65 / CBS 138) (Yeast) protein is Pre-mRNA-splicing factor SYF1 (SYF1).